The primary structure comprises 153 residues: UPF0311 protein RPA1785 (153 aa).

Belongs to the UPF0311 family.

The protein is UPF0311 protein RPA1785 of Rhodopseudomonas palustris (strain ATCC BAA-98 / CGA009).